The chain runs to 2544 residues: MDTDSEWASEPIAIIGMSCKFSGGASNPDKLWDLMASGKTGWSEIPEERFNLKGVYHANHERTSTTHVKGGHFLDEDVAVFDAAFFNYSAEMAQVVDPQFRLQLESAYEALENAGLPLSRVLGSQTSVFAGVFAHDYQEGIIRDEDRLPRFNVVGTWSPMSSNRISHFFDFRGASMTLETGCSTTLVALHQAVQTLRNREADMSVVTGANVMLNPDTFKAIGSLGMLSPDGRSYSFDSRANGYGRGEGVATIIIKRLSDALAANDPIRAVIRETAVNQDGKTDTITTPSGAAQVDLMRECYSRAGLDPRGTQYFEAHGTGTPTGDPIEAQAMATIFSEGRDDKNHYLRIGSVKTNVGHTEAVSGLAAVIKGVLCLEKGLIPPTVNYEMPNPKLKLNEWRLKVVRTIEHWPDSLIDGPCRMSINNFGYGGTNAHVILESADPWTLTPDLDFELVNGKGLKGNGDASDDVSDAKVLILSARDERGCQQMVSDLKGYLEKHKPLDRKASKQLLQNLSYTLCERRTLFQWVATHQVRLDSGALDSVIQGLDSPCFKPTRRASESPRIGMVFTGQVFRRSIEEAETYLNALGADWSLLEELQRDKKTTKVHETKISIPICVALQIALVRLLESWGITASGVASHSSGEISAAFAVGALTHHQAIAIAYFRAIIVADGTQRAPGSAKGAMAAIGLGVGTVQPYLDRLTEGKAVVACVNSPQSVTISGDEDAIDEITDLCKQDGVFARRLKVQQAYHSHHMDPFADTYRERLRIEMDRSVVKGDKQKLKAVFSSAVTGGRITDIKEIASPDHWVGSLIRPVEFVDALTELVLGDPDDPTGRSVDVLLEVGPHTALGGPIREILSLSEFGGIELPYWGCLVRDEHAGDSMRSAAINLFREGQSLAMDKINFPVPAYDGEGPQVLTNLPSYPWNHTMRHWQESRVNRAIRERGQPPHELLGMPVAGNDPSASVWRRVLRVTETPWLRDHMVQGSIVYPGAGYICLAIEAVRQLTDQDKSVSGLRLRDINFLFALVIPDNADGVEIRTTLQSVPEREIGAQGWWRFEVSSVTLENRWTLHATGMVGIEESAVLETERRRRPLSIYTRQPNPQDLFANLRAHSVYHGPLFQNTNRIIQDGREPRSICDITIRHEASSDTDPEVAAQNSLLHPITLDAVFVAFYSALPSVGALQEEPKLPRSVRAMWISSNISHQIGHTLQCDTSLLNDDPQRGRADITVFDGKTDATVLKIQGVELAALGRGSSASTSTEVCSRVVWEPDLSFRNPLAFEQIKKHLASTNSDQEADVVRDLQRLCIAYASDALRELTPGDVAGLQEQPHLAKYYAFLRGLVNKTTEEPGKPQQSMESVDEKVVCRLGPLLPSILRGERSVEEVRSLMDEYNTNSRRQLSSLRQLSALLQTIAHKSPGARVLQIGSSTGALATRRILETLDTNLVASWHITEPSSELLDNARAQLADWADLLQFEQLDIEQSPFKKKFIPESYDVVVSLHALHAIKNPASALGNVRTLLKPGGTLLLVETTKNQVDVDFVFALRPGWLQDKNPLTSWDAVLQDGGFSGLDLEIYDSESDIHTNSVIMSTVPAKDQKADLSKVKDSFAVVSSIKTPPSSPIVDQLCQRIQALTGTATTHLVLEKTSGNTYKDKICVFIGELDRPILADLDAVQMEGLRAMVTQCSGLLWVTTGGTVEREAPERAVHQGFLRVLRNEYISRYFISLDLDPAHADAGAAGWSSGANPAVSAIVQALEEGFGHGSTRTGPAEFEYAERNGVLHIPRYYKDEKYNNMVTCPLAPSWSDHDERSIPLERLFQDRQLRLQVGIPGHLGTLAFAENEANHADLPPELMEITPRAHGACSRDVMAAMGQLKDQAMGFECAGIIARLGSEAYSKGYRVGDRVMALSAGASFASNVCVPWHGVIQMPKDMDFVSAASLPLAFTVAYFGLVRSASLTTGQSVLIHAAAGAFGQAAIMLAKHLGVTEIYATVGSPEKQDILEREYGIPSERIFSSRDASFAPAILAATKGRGVDLVLSSLSGPLLQESLSTVAPLGYLVNIGKADIERNSLMALESFSRGISFVSMDVPTLLQRRGPDVHRTLGEITSLVEQQVLKPVYPVTVYPMQDVQAAFRFVQTGDQMGKVVLSAGSDEQVYVVPRPKGLTTQSQLRPDASYLIVGGVGGIGRSVAHWLVAHGAQHLILLSRSAGNLDLDQNKNSDGAFFINELRHMGCRVKPVSCDVSLASSLTVALRACEDDGFPPVRGVIQGAMLLRDAIFEQMTLDDWRSGLSPKLYGTWNLHTEFSQPDSLDFFIMLSSVSGVAGIASQSNYAAGGSYEDAMARWRQSQGLPGVAIDLGPISDIGYVSTDPRVAERLRKDGEFAMLDEGIVLRALNAAILHPLGRSQIIIGLTSSPGPHWDPNGRSQLGRDARYATLRPHTKVSARQDGESTSASLATQLADTNDPQEGARLIGAAIAEKLADIFMTPIAEIDLSKPPAHYGVDSLIAVELRNMLALQAAADISIFNILQTASLAALAGLVAEKSRHFQA.

A Ketosynthase family 3 (KS3) domain is found at 9 to 438; sequence SEPIAIIGMS…GTNAHVILES (430 aa). Residues Cys182, His317, and His358 each act as for beta-ketoacyl synthase activity in the active site. Positions 566–876 are malonyl-CoA:ACP transacylase (MAT) domain; the sequence is VFTGQVFRRS…PYWGCLVRDE (311 aa). The N-terminal hotdog fold stretch occupies residues 948–1082; the sequence is HELLGMPVAG…GMVGIEESAV (135 aa). The segment at 948-1252 is dehydratase (DH) domain; the sequence is HELLGMPVAG…VELAALGRGS (305 aa). The PKS/mFAS DH domain maps to 948-1254; that stretch reads HELLGMPVAG…LAALGRGSSA (307 aa). His980 functions as the Proton acceptor; for dehydratase activity in the catalytic mechanism. The interval 1095 to 1254 is C-terminal hotdog fold; it reads YTRQPNPQDL…LAALGRGSSA (160 aa). Asp1165 acts as the Proton donor; for dehydratase activity in catalysis. Residues 1398 to 1573 form a methyltransferase (CMet) domain region; sequence SSLRQLSALL…FSGLDLEIYD (176 aa). The tract at residues 1826–2142 is enoyl reductase (ER) domain; sequence GHLGTLAFAE…TGDQMGKVVL (317 aa). Positions 2169–2356 are ketoreductase (KR) domain; the sequence is ASYLIVGGVG…GVAIDLGPIS (188 aa). The region spanning 2462–2539 is the Carrier domain; the sequence is EGARLIGAAI…ALAGLVAEKS (78 aa). Residue Ser2499 is modified to O-(pantetheine 4'-phosphoryl)serine.

Pantetheine 4'-phosphate is required as a cofactor.

It participates in secondary metabolite biosynthesis. Its function is as follows. Highly reducing polyketide synthase; part of the pkh gene cluster that mediates the biosynthesis of 2,4-dihydroxy-6-[(3E,5E,7E)-2-oxonona-3,5,7-trienyl]benzaldehyde. The highly reducing polyketide synthase pkhB first produces the (2E,4E,6E)-octa-2,4,6-trienyl strater unit for the non-reducing polyketide synthase pkhA. This octatrienoyl starter is then loaded onto the SAT domain of the NR-PKS pkhA to be condensed with 4 malonyl-CoA units to yield 2,4-dihydroxy-6-[(3E,5E,7E)-2-oxonona-3,5,7-trienyl]benzaldehyde. This chain is Highly reducing polyketide synthase pkhB, found in Emericella nidulans (strain FGSC A4 / ATCC 38163 / CBS 112.46 / NRRL 194 / M139) (Aspergillus nidulans).